The chain runs to 396 residues: MAKAKFERSKPHVNIGTIGHVDHGKTTTTAAITKVLADKFPEANKSFAFDAIDKAPEEKERGITINISHVEYETEKRHYAHVDAPGHADYIKNMITGAAQMDGAILVVAATDGPMPQTREHVLLARQVGVPYILVALNKCDMVDDEELLELVEMEVRELLAEQDFDEEAPVVHISALKALEGDEKWANQILELMQACDESIPDPERETDKPFLMPVEDIFTITGRGTVVTGRVERGILNLNDEVEILGIREKSQKTTVTSIEMFNKLLDTAEAGDNAALLLRGLKREDVERGQIIAKPGEYTPHTEFEGSVYVLSKDEGGRHTPFFDNYRPQFYFRTTDVTGVVKLPEGTEMVMPGDNVDMSVTLIQPVAMDEGLRFAIREGGRTVGAGRVTKINK.

One can recognise a tr-type G domain in the interval 10–205 (KPHVNIGTIG…ACDESIPDPE (196 aa)). Residues 19 to 26 (GHVDHGKT) are G1. 19 to 26 (GHVDHGKT) contributes to the GTP binding site. Residue Thr26 coordinates Mg(2+). The interval 62 to 66 (GITIN) is G2. The segment at 83–86 (DAPG) is G3. GTP is bound by residues 83–87 (DAPGH) and 138–141 (NKCD). The interval 138 to 141 (NKCD) is G4. The interval 175–177 (SAL) is G5.

The protein belongs to the TRAFAC class translation factor GTPase superfamily. Classic translation factor GTPase family. EF-Tu/EF-1A subfamily. In terms of assembly, monomer.

It is found in the cytoplasm. It catalyses the reaction GTP + H2O = GDP + phosphate + H(+). Functionally, GTP hydrolase that promotes the GTP-dependent binding of aminoacyl-tRNA to the A-site of ribosomes during protein biosynthesis. In Corynebacterium jeikeium (strain K411), this protein is Elongation factor Tu.